The sequence spans 77 residues: Sec-independent protein translocase protein TatA (77 aa).

The chain crosses the membrane as a helical span at residues G2–F22. 2 stretches are compositionally biased toward basic and acidic residues: residues D46–K59 and Q66–D77. The segment at D46–D77 is disordered.

This sequence belongs to the TatA/E family. As to quaternary structure, the Tat system comprises two distinct complexes: a TatABC complex, containing multiple copies of TatA, TatB and TatC subunits, and a separate TatA complex, containing only TatA subunits. Substrates initially bind to the TatABC complex, which probably triggers association of the separate TatA complex to form the active translocon.

It localises to the cell inner membrane. Its function is as follows. Part of the twin-arginine translocation (Tat) system that transports large folded proteins containing a characteristic twin-arginine motif in their signal peptide across membranes. TatA could form the protein-conducting channel of the Tat system. In Ectopseudomonas mendocina (strain ymp) (Pseudomonas mendocina), this protein is Sec-independent protein translocase protein TatA.